Reading from the N-terminus, the 506-residue chain is MEEFKRYFELDRYHQHDFLYPLIFQEYIYALAHDHGLNRSILLENAGYDNKSSLLIVKRLITRMYEQNHFLISVNDSNQNQFLGHNKNLSYQMISEGFSVIVEIPFSLRLISSLEGKEIVKSHNLRSIHSIFPFLEEKFLHLNYVLDILIPYPIHLEILVQTLRHWVKDASSLHLLRFFLHEYRNWNSLITPKKTSFFFSKRNERLFLFLYNSHVCEYESIFVFLRNQSSHLRSTSSGALLERIYFYGKIEHHVEVFAKDFQAMLWLFKDPFIHYVRYQGKSILASKGTSLLMNKWKYYLVNCWQCHFYVWSQPRSIYINQLSNHSLHFLGYLSSVRLNPSMVRSQMLENSYLIDNAIKKFDTIVPIIPLIGSLAKAKFCNVLGHPISKPVWADLSDSDIIDRFGRICRNLSHYHSGSSKKKSLYRIKYILRLSCARTLARKHKSTVRAFLKRVGSELLEEFFTEEEPVLSLTFPRASSTSRGLWLYRRRIWYLDIICINDLANPE.

This sequence belongs to the intron maturase 2 family. MatK subfamily.

The protein localises to the plastid. It localises to the chloroplast. Usually encoded in the trnK tRNA gene intron. Probably assists in splicing its own and other chloroplast group II introns. In Hydrangea macrophylla (Bigleaf hydrangea), this protein is Maturase K.